A 39-amino-acid chain; its full sequence is MYRKFSDECFGPSTLINAIKVIALVVLITISAVVYLSVC.

Residues 18-38 (AIKVIALVVLITISAVVYLSV) traverse the membrane as a helical segment.

The protein resides in the membrane. This is an uncharacterized protein from Enterobacteriaceae (Bacteriophage Mu).